The following is a 188-amino-acid chain: Protein salivary glands marred (188 aa).

This sequence belongs to the TNFAIP8 family. As to quaternary structure, interacts with the Ste20-like MAP kinase msn.

It is found in the cytoplasm. The protein localises to the cytoskeleton. In terms of biological role, important for modulating JNK signaling, cytoskeletal remodeling and autophagy in larval salivary glands. During salivary gland development, involved in the positive regulation of the JNK signaling pathway, acting downstream of the TNF ligand egr and upstream of bsk. The polypeptide is Protein salivary glands marred (Drosophila melanogaster (Fruit fly)).